The sequence spans 436 residues: Phosphoribosylamine--glycine ligase (436 aa).

The 213-residue stretch at 106-318 (RKLFEDYRIP…MLEICEGIVD (213 aa)) folds into the ATP-grasp domain. An ATP-binding site is contributed by 133–196 (MEDFDSEAVV…EERVVGEEFT (64 aa)). Positions 276, 288, and 290 each coordinate Mg(2+). Gln-276, Glu-288, and Asn-290 together coordinate Mn(2+).

The protein belongs to the GARS family. It depends on Mg(2+) as a cofactor. Mn(2+) is required as a cofactor.

The catalysed reaction is 5-phospho-beta-D-ribosylamine + glycine + ATP = N(1)-(5-phospho-beta-D-ribosyl)glycinamide + ADP + phosphate + H(+). Its pathway is purine metabolism; IMP biosynthesis via de novo pathway; N(1)-(5-phospho-D-ribosyl)glycinamide from 5-phospho-alpha-D-ribose 1-diphosphate: step 2/2. The protein is Phosphoribosylamine--glycine ligase of Methanothermobacter thermautotrophicus (strain ATCC 29096 / DSM 1053 / JCM 10044 / NBRC 100330 / Delta H) (Methanobacterium thermoautotrophicum).